Consider the following 396-residue polypeptide: Lipid-A-disaccharide synthase (396 aa).

Belongs to the LpxB family.

It catalyses the reaction a lipid X + a UDP-2-N,3-O-bis[(3R)-3-hydroxyacyl]-alpha-D-glucosamine = a lipid A disaccharide + UDP + H(+). Its pathway is bacterial outer membrane biogenesis; LPS lipid A biosynthesis. In terms of biological role, condensation of UDP-2,3-diacylglucosamine and 2,3-diacylglucosamine-1-phosphate to form lipid A disaccharide, a precursor of lipid A, a phosphorylated glycolipid that anchors the lipopolysaccharide to the outer membrane of the cell. In Hahella chejuensis (strain KCTC 2396), this protein is Lipid-A-disaccharide synthase.